Consider the following 456-residue polypeptide: Bifunctional protein GlmU (456 aa).

Residues Met-1–Arg-229 form a pyrophosphorylase region. Residues Leu-11 to Gly-14, Lys-25, Gln-76, Gly-81 to Thr-82, Tyr-103 to Asp-105, Gly-140, Glu-154, Asn-169, and Asn-227 each bind UDP-N-acetyl-alpha-D-glucosamine. Asp-105 contacts Mg(2+). Mg(2+) is bound at residue Asn-227. A linker region spans residues Leu-230–Ala-250. Residues Gly-251–Lys-456 are N-acetyltransferase. UDP-N-acetyl-alpha-D-glucosamine contacts are provided by Arg-333 and Lys-351. His-363 serves as the catalytic Proton acceptor. UDP-N-acetyl-alpha-D-glucosamine-binding residues include Tyr-366 and Asn-377. Acetyl-CoA is bound by residues Ala-380, Asn-386–Tyr-387, Ser-405, Ala-423, and Arg-440.

In the N-terminal section; belongs to the N-acetylglucosamine-1-phosphate uridyltransferase family. It in the C-terminal section; belongs to the transferase hexapeptide repeat family. Homotrimer. It depends on Mg(2+) as a cofactor.

Its subcellular location is the cytoplasm. It carries out the reaction alpha-D-glucosamine 1-phosphate + acetyl-CoA = N-acetyl-alpha-D-glucosamine 1-phosphate + CoA + H(+). The enzyme catalyses N-acetyl-alpha-D-glucosamine 1-phosphate + UTP + H(+) = UDP-N-acetyl-alpha-D-glucosamine + diphosphate. It participates in nucleotide-sugar biosynthesis; UDP-N-acetyl-alpha-D-glucosamine biosynthesis; N-acetyl-alpha-D-glucosamine 1-phosphate from alpha-D-glucosamine 6-phosphate (route II): step 2/2. It functions in the pathway nucleotide-sugar biosynthesis; UDP-N-acetyl-alpha-D-glucosamine biosynthesis; UDP-N-acetyl-alpha-D-glucosamine from N-acetyl-alpha-D-glucosamine 1-phosphate: step 1/1. The protein operates within bacterial outer membrane biogenesis; LPS lipid A biosynthesis. In terms of biological role, catalyzes the last two sequential reactions in the de novo biosynthetic pathway for UDP-N-acetylglucosamine (UDP-GlcNAc). The C-terminal domain catalyzes the transfer of acetyl group from acetyl coenzyme A to glucosamine-1-phosphate (GlcN-1-P) to produce N-acetylglucosamine-1-phosphate (GlcNAc-1-P), which is converted into UDP-GlcNAc by the transfer of uridine 5-monophosphate (from uridine 5-triphosphate), a reaction catalyzed by the N-terminal domain. This chain is Bifunctional protein GlmU, found in Enterobacter sp. (strain 638).